A 370-amino-acid polypeptide reads, in one-letter code: UDP-N-acetylglucosamine--N-acetylmuramyl-(pentapeptide) pyrophosphoryl-undecaprenol N-acetylglucosamine transferase (370 aa).

Residues 15–17, asparagine 129, arginine 170, serine 199, isoleucine 254, and glutamine 299 contribute to the UDP-N-acetyl-alpha-D-glucosamine site; that span reads TGG.

This sequence belongs to the glycosyltransferase 28 family. MurG subfamily.

The protein localises to the cell inner membrane. The enzyme catalyses di-trans,octa-cis-undecaprenyl diphospho-N-acetyl-alpha-D-muramoyl-L-alanyl-D-glutamyl-meso-2,6-diaminopimeloyl-D-alanyl-D-alanine + UDP-N-acetyl-alpha-D-glucosamine = di-trans,octa-cis-undecaprenyl diphospho-[N-acetyl-alpha-D-glucosaminyl-(1-&gt;4)]-N-acetyl-alpha-D-muramoyl-L-alanyl-D-glutamyl-meso-2,6-diaminopimeloyl-D-alanyl-D-alanine + UDP + H(+). Its pathway is cell wall biogenesis; peptidoglycan biosynthesis. Its function is as follows. Cell wall formation. Catalyzes the transfer of a GlcNAc subunit on undecaprenyl-pyrophosphoryl-MurNAc-pentapeptide (lipid intermediate I) to form undecaprenyl-pyrophosphoryl-MurNAc-(pentapeptide)GlcNAc (lipid intermediate II). This chain is UDP-N-acetylglucosamine--N-acetylmuramyl-(pentapeptide) pyrophosphoryl-undecaprenol N-acetylglucosamine transferase, found in Magnetococcus marinus (strain ATCC BAA-1437 / JCM 17883 / MC-1).